A 511-amino-acid polypeptide reads, in one-letter code: MRKIDIFDTTLRDGEQSAGINLNTAEKIEIAKQLERLGVTIIEAGFPASSPGDFDAVHRIAETVKNSVVTGLARCIQKDIDTTWEAIKGAQQPHIHIFLATSPIHMEYKLKKSPEQVIEQAVEAVKYAKKYFPLVQWSAEDAFRSDREFLVRIMNEVVTAGATTINVPDTVGYASPYEYGALFKYLLENVKGADKVKFSAHCHDDLGMATANTLAAIENGAAQVEGTINGIGERAGNVALEEIAVALHIRKDYYQVETGIQLQEIKRTSQLVSKLTNVVIQPNKAIVGRNAFAHESGIHQDGVLKNPETYEIISPALIGEGEIPLVLGKHSGRAAFRDRAETLGFDLSDEKLNKAFVEFKKLADRKKEITEEDLLTLLTEQQIQLEDVPLFELKMVQVQYGTENIPTATAIVLTPEGLEKTVVATGAGSVEAIFNTLEQLVPNAVHVIDYRVTSVGKGRDALGEAVVNIRYDHVSTTGRNSSQDVLEASAKAYLNAINRHLIKESLRAHPV.

The 263-residue stretch at 4 to 266 (IDIFDTTLRD…ETGIQLQEIK (263 aa)) folds into the Pyruvate carboxyltransferase domain. Mn(2+) is bound by residues D13, H201, H203, and N237. A regulatory domain region spans residues 392–511 (ELKMVQVQYG…IKESLRAHPV (120 aa)).

This sequence belongs to the alpha-IPM synthase/homocitrate synthase family. LeuA type 1 subfamily. Homodimer. Mn(2+) is required as a cofactor.

It localises to the cytoplasm. The catalysed reaction is 3-methyl-2-oxobutanoate + acetyl-CoA + H2O = (2S)-2-isopropylmalate + CoA + H(+). It participates in amino-acid biosynthesis; L-leucine biosynthesis; L-leucine from 3-methyl-2-oxobutanoate: step 1/4. Functionally, catalyzes the condensation of the acetyl group of acetyl-CoA with 3-methyl-2-oxobutanoate (2-ketoisovalerate) to form 3-carboxy-3-hydroxy-4-methylpentanoate (2-isopropylmalate). The polypeptide is 2-isopropylmalate synthase (Lysinibacillus sphaericus (strain C3-41)).